Reading from the N-terminus, the 301-residue chain is Probable alpha-L-glutamate ligase (301 aa).

The ATP-grasp domain maps to 104 to 287 (LQLLSRKGIG…IAGIIIQYLE (184 aa)). ATP contacts are provided by residues Lys141, 178 to 179 (EY), Asp187, and 211 to 213 (RSN). The Mg(2+) site is built by Asp248, Glu260, and Asn262. Mn(2+) contacts are provided by Asp248, Glu260, and Asn262.

It belongs to the RimK family. The cofactor is Mg(2+). Requires Mn(2+) as cofactor.

The chain is Probable alpha-L-glutamate ligase from Pseudomonas aeruginosa (strain UCBPP-PA14).